The primary structure comprises 212 residues: MLNVIATGLSLKARGKRRRQRWVDDGRVLALGESRRSSAISVADVVASLTRDVADFPVPGVEFKDLTPLFADRRGLAAVTEALADRASGADLVAGVDARGFLVAAAVATRLEVGVLAVRKGGKLPRPVLSEEYYREYGAATLEILAEGIEVAGRRVVIIDDVLATGGTIGATRRLLERGGANVAGAAVVVELAGLSGRAALAPLPVHSLSRL.

This sequence belongs to the purine/pyrimidine phosphoribosyltransferase family. As to quaternary structure, homodimer.

The protein resides in the cytoplasm. It catalyses the reaction AMP + diphosphate = 5-phospho-alpha-D-ribose 1-diphosphate + adenine. It functions in the pathway purine metabolism; AMP biosynthesis via salvage pathway; AMP from adenine: step 1/1. Catalyzes a salvage reaction resulting in the formation of AMP, that is energically less costly than de novo synthesis. In Mycobacterium tuberculosis (strain CDC 1551 / Oshkosh), this protein is Adenine phosphoribosyltransferase.